The primary structure comprises 689 residues: Glycine--tRNA ligase beta subunit (689 aa).

The protein belongs to the class-II aminoacyl-tRNA synthetase family. In terms of assembly, tetramer of two alpha and two beta subunits.

It localises to the cytoplasm. It carries out the reaction tRNA(Gly) + glycine + ATP = glycyl-tRNA(Gly) + AMP + diphosphate. This Hamiltonella defensa subsp. Acyrthosiphon pisum (strain 5AT) protein is Glycine--tRNA ligase beta subunit.